We begin with the raw amino-acid sequence, 99 residues long: uncharacterized protein (99 aa).

The N-terminal stretch at 1–17 (MMMNAFFPAMALIVLVG) is a signal peptide. Cys-18 is lipidated: N-palmitoyl cysteine. Cys-18 is lipidated: S-diacylglycerol cysteine.

It localises to the cell membrane. This is an uncharacterized protein from Escherichia coli (strain UTI89 / UPEC).